A 242-amino-acid polypeptide reads, in one-letter code: 3-dehydroquinate dehydratase (242 aa).

3-dehydroquinate contacts are provided by residues 39-41 and Arg-73; that span reads EIR. Catalysis depends on His-135, which acts as the Proton donor/acceptor. The active-site Schiff-base intermediate with substrate is Lys-162. 2 residues coordinate 3-dehydroquinate: Arg-203 and Gln-228.

It belongs to the type-I 3-dehydroquinase family. As to quaternary structure, homodimer.

It catalyses the reaction 3-dehydroquinate = 3-dehydroshikimate + H2O. Its pathway is metabolic intermediate biosynthesis; chorismate biosynthesis; chorismate from D-erythrose 4-phosphate and phosphoenolpyruvate: step 3/7. Its function is as follows. Involved in the third step of the chorismate pathway, which leads to the biosynthesis of aromatic amino acids. Catalyzes the cis-dehydration of 3-dehydroquinate (DHQ) and introduces the first double bond of the aromatic ring to yield 3-dehydroshikimate. This chain is 3-dehydroquinate dehydratase, found in Methanosarcina barkeri (strain Fusaro / DSM 804).